Here is a 290-residue protein sequence, read N- to C-terminus: MLKTIHEKARHHTRPLWAWLKLLWQRIDEDNMTTLAGNLAYVSLLSLVPLVAVVFALFAAFPMFSDVSIQLRHFIFANFLPATGDVIQQYIEQFVANSNKMTAVGACGLIVTALLLMYSIDSALNAIWRSKRVRPKIYSFAVYWMILTLGPLLAGASLAISSYLLSLRWASDLNTVIDNVLRIFPLLLSWISFWLLYSIVPTIRVPNRDAIVGAFVAALLFEAGKKGFALYITMFPSYQLIYGVLAVIPILFVWVYWTWCIVLLGAEITVTLGEYRKLKQAAEQEEDDEP.

Transmembrane regions (helical) follow at residues Leu44 to Phe64, Val104 to Leu124, Phe140 to Ile160, Ile183 to Ile203, Ala210 to Leu230, and Val244 to Leu264.

The protein belongs to the UPF0761 family.

The protein resides in the cell inner membrane. This is UPF0761 membrane protein YihY from Escherichia fergusonii (strain ATCC 35469 / DSM 13698 / CCUG 18766 / IAM 14443 / JCM 21226 / LMG 7866 / NBRC 102419 / NCTC 12128 / CDC 0568-73).